The following is a 156-amino-acid chain: Ribosomal RNA large subunit methyltransferase H (156 aa).

S-adenosyl-L-methionine-binding positions include Leu-73, Gly-104, and 123–128 (VSSLTL).

This sequence belongs to the RNA methyltransferase RlmH family. Homodimer.

The protein resides in the cytoplasm. It carries out the reaction pseudouridine(1915) in 23S rRNA + S-adenosyl-L-methionine = N(3)-methylpseudouridine(1915) in 23S rRNA + S-adenosyl-L-homocysteine + H(+). Functionally, specifically methylates the pseudouridine at position 1915 (m3Psi1915) in 23S rRNA. The sequence is that of Ribosomal RNA large subunit methyltransferase H from Burkholderia mallei (strain NCTC 10247).